The following is a 505-amino-acid chain: Circadian clock protein KaiC3 (505 aa).

2 KaiC domains span residues 10–252 (EKLE…KSSD) and 253–485 (IRIT…LAGT). The residue at position 423 (Ser423) is a Phosphoserine; by autocatalysis. The residue at position 424 (Thr424) is a Phosphothreonine; by autocatalysis.

It belongs to the KaiC family. In terms of assembly, multimerizes, probably forming homohexamers, no interaction with KaiC1 or KaiC2 is seen. In another study forms hexamers, interacts with KaiB1, KaiB3, and KaiC1. Autophosphorylates and dephosphorylates. Dephosphorylation of KaiC3 was higher at 25 than at 30 or 35 degrees Celsius.

The enzyme catalyses L-seryl-[protein] + ATP = O-phospho-L-seryl-[protein] + ADP + H(+). It catalyses the reaction L-threonyl-[protein] + ATP = O-phospho-L-threonyl-[protein] + ADP + H(+). It carries out the reaction ATP + H2O = ADP + phosphate + H(+). With respect to regulation, ATPase activity is influenced by KaiB1 and KaiB3 in vitro; ATPase is reduced 35% by the KaiB1 tetramer and 55% by the KaiB3 monomer but not affected by KaiA or the KaiB3 tetramer. Seems to be linked to dark adaption of Synechocystis cells, but is not as essential as the core oscillator KaiAB1C1 for the circadian cycle. KaiB3 and KaiC3 may cross talk with the core oscillator. Autophosphorylates and dephosphorylates independently of KaiA. Has a weak ATPase, hydrolyzes 8.5 ATP/monomer/day, has no detectable ATP synthesis activity. ATPase activity reduced 55% by KaiB3 monomer but not the KaiB3 tetramer or KaiA in vitro, reduced 35% by KaiB1 tetramer. The protein is Circadian clock protein KaiC3 of Synechocystis sp. (strain ATCC 27184 / PCC 6803 / Kazusa).